A 272-amino-acid polypeptide reads, in one-letter code: METYAVFGNPIAHSKSPFIHQQFAQQLNIEHPYGRVLAPINDFINTLNAFFRAGGKGANVTVPFKEEAFARADELTERAALAGAVNTLKRLEDGRLLGDNTDGVGLLSDLERLSFIRPGLRILLIGAGGASRGVLLPLLSLDCAVTITNRTVSRAEELAKLFAHTGSIQALGMDELEGHEFDLIINATSSGISGDIPAIPSSLIHPGIYCYDMFYQKGKTPFLAWCEQRGSKRNADGLGMLVAQAAHAFLLWHGVLPDVEPVIKQLQEELSA.

Shikimate contacts are provided by residues 14–16 (SKS) and T61. K65 acts as the Proton acceptor in catalysis. Residue E77 coordinates NADP(+). Residues N86 and D102 each coordinate shikimate. Residues 126–130 (GAGGA), 149–154 (NRTVSR), and M213 each bind NADP(+). Y215 contacts shikimate. G237 provides a ligand contact to NADP(+).

The protein belongs to the shikimate dehydrogenase family. As to quaternary structure, homodimer.

The catalysed reaction is shikimate + NADP(+) = 3-dehydroshikimate + NADPH + H(+). The protein operates within metabolic intermediate biosynthesis; chorismate biosynthesis; chorismate from D-erythrose 4-phosphate and phosphoenolpyruvate: step 4/7. In terms of biological role, involved in the biosynthesis of the chorismate, which leads to the biosynthesis of aromatic amino acids. Catalyzes the reversible NADPH linked reduction of 3-dehydroshikimate (DHSA) to yield shikimate (SA). This Shigella flexneri protein is Shikimate dehydrogenase (NADP(+)).